Reading from the N-terminus, the 556-residue chain is Glucose-6-phosphate isomerase (556 aa).

The Proton donor role is filled by Glu-360. Residues His-391 and Lys-519 contribute to the active site.

It belongs to the GPI family.

It is found in the cytoplasm. The enzyme catalyses alpha-D-glucose 6-phosphate = beta-D-fructose 6-phosphate. It participates in carbohydrate biosynthesis; gluconeogenesis. It functions in the pathway carbohydrate degradation; glycolysis; D-glyceraldehyde 3-phosphate and glycerone phosphate from D-glucose: step 2/4. Its function is as follows. Catalyzes the reversible isomerization of glucose-6-phosphate to fructose-6-phosphate. This is Glucose-6-phosphate isomerase from Acinetobacter baumannii (strain AB0057).